A 184-amino-acid polypeptide reads, in one-letter code: ATP synthase subunit b, chloroplastic (184 aa).

Residues 27–49 traverse the membrane as a helical segment; that stretch reads LATNPINLSVVLGVLIFFGKGVL.

The protein belongs to the ATPase B chain family. As to quaternary structure, F-type ATPases have 2 components, F(1) - the catalytic core - and F(0) - the membrane proton channel. F(1) has five subunits: alpha(3), beta(3), gamma(1), delta(1), epsilon(1). F(0) has four main subunits: a(1), b(1), b'(1) and c(10-14). The alpha and beta chains form an alternating ring which encloses part of the gamma chain. F(1) is attached to F(0) by a central stalk formed by the gamma and epsilon chains, while a peripheral stalk is formed by the delta, b and b' chains.

It localises to the plastid. The protein resides in the chloroplast thylakoid membrane. Functionally, f(1)F(0) ATP synthase produces ATP from ADP in the presence of a proton or sodium gradient. F-type ATPases consist of two structural domains, F(1) containing the extramembraneous catalytic core and F(0) containing the membrane proton channel, linked together by a central stalk and a peripheral stalk. During catalysis, ATP synthesis in the catalytic domain of F(1) is coupled via a rotary mechanism of the central stalk subunits to proton translocation. Its function is as follows. Component of the F(0) channel, it forms part of the peripheral stalk, linking F(1) to F(0). This Nicotiana tomentosiformis (Tobacco) protein is ATP synthase subunit b, chloroplastic.